We begin with the raw amino-acid sequence, 326 residues long: Mitochondrial glycine transporter (326 aa).

Solcar repeat units lie at residues 45 to 134, 141 to 225, and 237 to 321; these read HPVI…SKQY, PTAL…TRAT, and LMPL…MMAK. A run of 6 helical transmembrane segments spans residues 51–76, 109–135, 147–172, 200–223, 241–267, and 296–314; these read FLCG…TRLQ, GMSP…KQYF, VILG…TRYE, GLTA…SQTR, VNFS…KTHM, and GSVP…AWTV.

Belongs to the mitochondrial carrier (TC 2.A.29) family. SLC25A38 subfamily.

The protein localises to the mitochondrion inner membrane. It carries out the reaction glycine(in) = glycine(out). Functionally, mitochondrial glycine transporter that imports glycine into the mitochondrial matrix. Plays an important role in providing glycine for the first enzymatic step in heme biosynthesis, the condensation of glycine with succinyl-CoA to produce 5-aminolevulinate (ALA) in the mitochondrial matrix. Required during erythropoiesis. Its function is as follows. Plays a role as pro-apoptotic protein that induces caspase-dependent apoptosis. This Rattus norvegicus (Rat) protein is Mitochondrial glycine transporter.